Consider the following 213-residue polypeptide: Glycerol-3-phosphate acyltransferase (213 aa).

The next 6 helical transmembrane spans lie at 2 to 22 (ITIV…GLWI), 52 to 74 (AGMA…PIIF), 81 to 100 (PLIF…FAGF), 112 to 132 (VIFG…FGAL), 143 to 163 (VTAS…GFIL), and 164 to 184 (SNYD…IIIR).

The protein belongs to the PlsY family. As to quaternary structure, probably interacts with PlsX.

It is found in the cell membrane. The catalysed reaction is an acyl phosphate + sn-glycerol 3-phosphate = a 1-acyl-sn-glycero-3-phosphate + phosphate. It participates in lipid metabolism; phospholipid metabolism. Catalyzes the transfer of an acyl group from acyl-phosphate (acyl-PO(4)) to glycerol-3-phosphate (G3P) to form lysophosphatidic acid (LPA). This enzyme utilizes acyl-phosphate as fatty acyl donor, but not acyl-CoA or acyl-ACP. This chain is Glycerol-3-phosphate acyltransferase, found in Streptococcus pneumoniae (strain CGSP14).